We begin with the raw amino-acid sequence, 297 residues long: Homoserine kinase (297 aa).

Residue 82-92 (PLTRGLGSSAS) coordinates ATP.

This sequence belongs to the GHMP kinase family. Homoserine kinase subfamily.

The protein localises to the cytoplasm. It carries out the reaction L-homoserine + ATP = O-phospho-L-homoserine + ADP + H(+). It functions in the pathway amino-acid biosynthesis; L-threonine biosynthesis; L-threonine from L-aspartate: step 4/5. Catalyzes the ATP-dependent phosphorylation of L-homoserine to L-homoserine phosphate. This is Homoserine kinase from Bacillus cereus (strain ZK / E33L).